A 272-amino-acid polypeptide reads, in one-letter code: HMP-PP phosphatase (272 aa).

The Nucleophile role is filled by Asp-8. Residues Asp-8, Asp-10, and Asp-212 each coordinate Mg(2+).

Belongs to the HAD-like hydrolase superfamily. Cof family. Mg(2+) is required as a cofactor.

The enzyme catalyses 4-amino-2-methyl-5-(diphosphooxymethyl)pyrimidine + H2O = 4-amino-2-methyl-5-(phosphooxymethyl)pyrimidine + phosphate + H(+). Functionally, catalyzes the hydrolysis of 4-amino-2-methyl-5-hydroxymethylpyrimidine pyrophosphate (HMP-PP) to 4-amino-2-methyl-5-hydroxymethylpyrimidine phosphate (HMP-P). This Escherichia coli O81 (strain ED1a) protein is HMP-PP phosphatase.